Reading from the N-terminus, the 956-residue chain is Matrilin-2 (956 aa).

A signal peptide spans 1 to 23 (MEKMLVGCLLMLGQLFLVLPVDG). In terms of domain architecture, VWFA 1 spans 57–232 (DLVFIIDSSR…SQIESLTSVF (176 aa)). The N-linked (GlcNAc...) asparagine glycan is linked to asparagine 221. EGF-like domains lie at 238–278 (TVHM…KTCR), 279–319 (IQDL…KRCT), 320–360 (AVDY…KTCS), 361–401 (KIDY…KTCR), 402–442 (RINY…KTCS), 443–483 (RVDH…KTCS), 484–524 (RADY…KTCA), 525–565 (KLDS…KTCR), 566–606 (RKDV…KRCR), and 607–647 (RKNV…KHCK). Intrachain disulfides connect cysteine 242–cysteine 253, cysteine 249–cysteine 262, cysteine 264–cysteine 277, cysteine 283–cysteine 294, cysteine 290–cysteine 303, cysteine 305–cysteine 318, cysteine 324–cysteine 335, cysteine 331–cysteine 344, cysteine 346–cysteine 359, cysteine 365–cysteine 376, cysteine 372–cysteine 385, cysteine 387–cysteine 400, cysteine 406–cysteine 417, cysteine 413–cysteine 426, cysteine 428–cysteine 441, cysteine 447–cysteine 458, cysteine 454–cysteine 467, cysteine 469–cysteine 482, cysteine 488–cysteine 499, cysteine 495–cysteine 508, cysteine 510–cysteine 523, cysteine 529–cysteine 540, cysteine 536–cysteine 549, cysteine 551–cysteine 564, cysteine 570–cysteine 581, cysteine 577–cysteine 590, cysteine 592–cysteine 605, cysteine 611–cysteine 622, cysteine 618–cysteine 631, and cysteine 633–cysteine 646. In terms of domain architecture, VWFA 2 spans 655 to 830 (DLVFVIDGSK…STMGEISEKL (176 aa)). A glycan (N-linked (GlcNAc...) asparagine) is linked at asparagine 890. The stretch at 917–955 (KCENLILFQNVANEEVRKLTQRLEEMTQRMEALENRLKY) forms a coiled coil.

In terms of tissue distribution, detected in a variety of organs, including calvaria, uterus, heart and brain, as well as fibroblast and osteoblast cell lines.

Its subcellular location is the secreted. Involved in matrix assembly. The protein is Matrilin-2 (Matn2) of Mus musculus (Mouse).